Here is a 258-residue protein sequence, read N- to C-terminus: Pimeloyl-[acyl-carrier protein] methyl ester esterase (258 aa).

The AB hydrolase-1 domain occupies 16–242 (LVLLHGWGLN…AAHAPFISHP (227 aa)). Residues W22, 82-83 (SL), and 143-147 (FLALQ) contribute to the substrate site. S82 functions as the Nucleophile in the catalytic mechanism. Residues D207 and H235 contribute to the active site. H235 provides a ligand contact to substrate.

This sequence belongs to the AB hydrolase superfamily. Carboxylesterase BioH family. In terms of assembly, monomer.

It is found in the cytoplasm. It carries out the reaction 6-carboxyhexanoyl-[ACP] methyl ester + H2O = 6-carboxyhexanoyl-[ACP] + methanol + H(+). The protein operates within cofactor biosynthesis; biotin biosynthesis. The physiological role of BioH is to remove the methyl group introduced by BioC when the pimeloyl moiety is complete. It allows to synthesize pimeloyl-ACP via the fatty acid synthetic pathway through the hydrolysis of the ester bonds of pimeloyl-ACP esters. The sequence is that of Pimeloyl-[acyl-carrier protein] methyl ester esterase from Edwardsiella ictaluri (strain 93-146).